The sequence spans 301 residues: Probable alpha-L-glutamate ligase (301 aa).

The ATP-grasp domain maps to 104-287; that stretch reads LQLLSRKGIG…VAGMIIQYLE (184 aa). ATP is bound by residues K141, 178-179, D187, and 211-213; these read EY and RSN. Mg(2+) contacts are provided by D248, E260, and N262. Positions 248, 260, and 262 each coordinate Mn(2+).

Belongs to the RimK family. It depends on Mg(2+) as a cofactor. The cofactor is Mn(2+).

The protein is Probable alpha-L-glutamate ligase of Ectopseudomonas mendocina (strain ymp) (Pseudomonas mendocina).